Consider the following 38-residue polypeptide: Photosystem II reaction center protein L (38 aa).

A helical membrane pass occupies residues 17–37 (SLYWGLLLIXVLAVLFSNYFF).

This sequence belongs to the PsbL family. In terms of assembly, PSII is composed of 1 copy each of membrane proteins PsbA, PsbB, PsbC, PsbD, PsbE, PsbF, PsbH, PsbI, PsbJ, PsbK, PsbL, PsbM, PsbT, PsbX, PsbY, PsbZ, Psb30/Ycf12, at least 3 peripheral proteins of the oxygen-evolving complex and a large number of cofactors. It forms dimeric complexes.

It is found in the plastid. Its subcellular location is the chloroplast thylakoid membrane. In terms of biological role, one of the components of the core complex of photosystem II (PSII). PSII is a light-driven water:plastoquinone oxidoreductase that uses light energy to abstract electrons from H(2)O, generating O(2) and a proton gradient subsequently used for ATP formation. It consists of a core antenna complex that captures photons, and an electron transfer chain that converts photonic excitation into a charge separation. This subunit is found at the monomer-monomer interface and is required for correct PSII assembly and/or dimerization. The chain is Photosystem II reaction center protein L from Allium textile (Textile onion).